Reading from the N-terminus, the 274-residue chain is Copper chaperone for superoxide dismutase (274 aa).

One can recognise an HMA domain in the interval 11–74 (VCALEFAVQM…LLESTGRQAV (64 aa)). 2 residues coordinate Cu cation: Cys22 and Cys25. Lys76 is covalently cross-linked (Glycyl lysine isopeptide (Lys-Gly) (interchain with G-Cter in ubiquitin)). The interval 88 to 234 (AAVAILEGCG…LACGIIARSA (147 aa)) is superoxide dismutase-like. The cysteines at positions 141 and 227 are disulfide-linked. The Zn(2+) site is built by His147, His155, His164, and Asp167. Glycyl lysine isopeptide (Lys-Gly) (interchain with G-Cter in ubiquitin) cross-links involve residues Lys189, Lys216, and Lys241. Cu cation contacts are provided by Cys244 and Cys246. At Ser267 the chain carries Phosphoserine.

It in the C-terminal section; belongs to the Cu-Zn superoxide dismutase family. Homodimer, and heterodimer with SOD1. Interacts with COMMD1. Interacts with XIAP/BIRC4. Interacts with SLC31A1(via C-terminal domain); this interaction is Cu(1+)-mediated. The heterodimer CCS:SOD1 interacts with SLC31A1; this heterotrimer is Cu(1+)-mediated and its maintenance is regulated through SOD1 activation. Cu(2+) serves as cofactor. Zn(2+) is required as a cofactor. Ubiquitinion by XIAP/BIRC4 leads to enhancement of its chaperone activity toward its physiologic target, SOD1, rather than proteasomal degradation. XIAP/BIRC4 preferentially ubiquitinates at Lys-241. As to expression, ubiquitous.

Its subcellular location is the cytoplasm. Functionally, delivers copper to copper zinc superoxide dismutase (SOD1). In Mus musculus (Mouse), this protein is Copper chaperone for superoxide dismutase.